Consider the following 421-residue polypeptide: Uracil permease (421 aa).

12 helical membrane passes run 18 to 38, 41 to 61, 65 to 85, 89 to 109, 115 to 135, 160 to 180, 186 to 206, 232 to 252, 304 to 324, 329 to 349, 371 to 391, and 393 to 413; these read IPLSLQHLFAMFGSTVLVPML, INPAICLLMNGIGTLIYIFLC, IPAYLGSSFAFISPVLIVIST, EAALSGFLVVGLVFCLIGLLV, GWIEIVFPPAAMGAIVAVIGL, PKVIAVSLVTLLTAVVGNVMF, IIPILISIIVGYALAAFLGIV, IAIIVPAALVVVAEHIGHLIV, VYSIWIIGGAAVMAIVLSFVG, LIQTIPVPVMGGVSILLFGVI, ILTAVVLIIGISGAAFKWGNF, and MKGMALATVIAILLGLFFNII.

The protein belongs to the nucleobase:cation symporter-2 (NCS2) (TC 2.A.40) family.

Its subcellular location is the cell membrane. Its activity is regulated as follows. Inhibited by the proton gradient disruptor carbonyl cyanide m-chlorophenylhydrazone (CCCP), but not by the sodium gradient disruptor ouabain. Both xanthine and uric acid act as competitive inhibitors of uracil transport. Functionally, specific for the uptake of uracil. Transport is probably proton-dependent. The chain is Uracil permease from Paenibacillus larvae subsp. larvae (strain NRRL B-3650 / LMG 16245).